Here is a 501-residue protein sequence, read N- to C-terminus: L-arabinose isomerase (501 aa).

Residues E306, E333, H350, and H450 each coordinate Mn(2+).

This sequence belongs to the arabinose isomerase family. Homohexamer. Requires Mn(2+) as cofactor.

The enzyme catalyses beta-L-arabinopyranose = L-ribulose. It participates in carbohydrate degradation; L-arabinose degradation via L-ribulose; D-xylulose 5-phosphate from L-arabinose (bacterial route): step 1/3. Catalyzes the conversion of L-arabinose to L-ribulose. The protein is L-arabinose isomerase of Serratia proteamaculans (strain 568).